The primary structure comprises 459 residues: tRNA modification GTPase MnmE (459 aa).

Arg-23, Glu-88, and Arg-127 together coordinate (6S)-5-formyl-5,6,7,8-tetrahydrofolate. Residues 223-381 (GLSVVIVGKP…IKNCIKELFF (159 aa)) enclose the TrmE-type G domain. A K(+)-binding site is contributed by Asn-233. GTP-binding positions include 233-238 (NVGKSS), 252-258 (TDIPGTT), and 277-280 (DTAG). Ser-237 is a binding site for Mg(2+). The K(+) site is built by Thr-252, Ile-254, and Thr-257. Position 258 (Thr-258) interacts with Mg(2+). Lys-459 serves as a coordination point for (6S)-5-formyl-5,6,7,8-tetrahydrofolate.

It belongs to the TRAFAC class TrmE-Era-EngA-EngB-Septin-like GTPase superfamily. TrmE GTPase family. In terms of assembly, homodimer. Heterotetramer of two MnmE and two MnmG subunits. Requires K(+) as cofactor.

Its subcellular location is the cytoplasm. In terms of biological role, exhibits a very high intrinsic GTPase hydrolysis rate. Involved in the addition of a carboxymethylaminomethyl (cmnm) group at the wobble position (U34) of certain tRNAs, forming tRNA-cmnm(5)s(2)U34. The protein is tRNA modification GTPase MnmE of Clostridium kluyveri (strain ATCC 8527 / DSM 555 / NBRC 12016 / NCIMB 10680 / K1).